A 161-amino-acid polypeptide reads, in one-letter code: Interleukin-17F (161 aa).

A signal peptide spans M1–A28. N-linked (GlcNAc...) asparagine glycosylation is present at N83. Cystine bridges form between C100–C150 and C105–C152.

This sequence belongs to the IL-17 family. As to quaternary structure, homodimer; disulfide-linked. Heterodimer with IL17A (IL17A-IL17F). Forms complexes with IL17RA and IL17RC receptors with 2:1 binding stoichiometry: two receptor chains for one interleukin molecule. IL17F homodimer forms predominantly complexes with IL17RC homodimer, whereas IL17A-IL17F favors complexes with IL17RA-IL17RC. IL17RA and IL17RC chains cannot distinguish between IL17A and IL17F molecules, potentially enabling the formation of topologically distinct complexes.

The protein localises to the secreted. Its function is as follows. Effector cytokine of innate and adaptive immune system involved in antimicrobial host defense and maintenance of tissue integrity. IL17A-IL17F signals via IL17RA-IL17RC heterodimeric receptor complex, triggering homotypic interaction of IL17RA and IL17RC chains with TRAF3IP2 adapter through SEFIR domains. This leads to downstream TRAF6-mediated activation of NF-kappa-B and MAPkinase pathways ultimately resulting in transcriptional activation of cytokines, chemokines, antimicrobial peptides and matrix metalloproteinases, with potential strong immune inflammation. IL17A-IL17F is primarily involved in host defense against extracellular bacteria and fungi by inducing neutrophilic inflammation. As signature effector cytokine of T-helper 17 cells (Th17), primarily induces neutrophil activation and recruitment at infection and inflammatory sites. Stimulates the production of antimicrobial beta-defensins DEFB1, DEFB103A, and DEFB104A by mucosal epithelial cells, limiting the entry of microbes through the epithelial barriers. IL17F homodimer can signal via IL17RC homodimeric receptor complex, triggering downstream activation of TRAF6 and NF-kappa-B signaling pathway. Via IL17RC induces transcriptional activation of IL33, a potent cytokine that stimulates group 2 innate lymphoid cells and adaptive T-helper 2 cells involved in pulmonary allergic response to fungi. Likely via IL17RC, promotes sympathetic innervation of peripheral organs by coordinating the communication between gamma-delta T cells and parenchymal cells. Stimulates sympathetic innervation of thermogenic adipose tissue by driving TGFB1 expression. Regulates the composition of intestinal microbiota and immune tolerance by inducing antimicrobial proteins that specifically control the growth of commensal Firmicutes and Bacteroidetes. In Rattus norvegicus (Rat), this protein is Interleukin-17F (Il17f).